Reading from the N-terminus, the 306-residue chain is MSERLLRPRATSTVFEALERGAALVALESSVLAQGLEPPYNREAARRMTEAVTAVGAIPVITAISRGTPTLGLDDEDLERFLQRDGVRKVSARDLGIAMADGADGATTVAATLALCALGGLEVFATGGIGGVHRDAPFDESADLIELSRTPVIVVCAGAKSILDLPATLERLETLGVPVVGCGTDELPGFFSLSTGLRLTSRLDRPEQIARAWRAHRALGRESAMLVVQPPPADVAIPADIVDAATRAALQAASLAGIRGAAVTPYLLAQIQQRTEGRSVSANLALLEANARLAGQIAVALVEGTP.

Glutamate 28 acts as the Proton donor in catalysis. Substrate-binding residues include lysine 89 and valine 109. Aspartate 139 lines the Mn(2+) pocket. A substrate-binding site is contributed by 141–143 (SAD). Lysine 160 functions as the Nucleophile in the catalytic mechanism.

This sequence belongs to the pseudouridine-5'-phosphate glycosidase family. As to quaternary structure, homotrimer. It depends on Mn(2+) as a cofactor.

The enzyme catalyses D-ribose 5-phosphate + uracil = psi-UMP + H2O. Functionally, catalyzes the reversible cleavage of pseudouridine 5'-phosphate (PsiMP) to ribose 5-phosphate and uracil. Functions biologically in the cleavage direction, as part of a pseudouridine degradation pathway. The chain is Pseudouridine-5'-phosphate glycosidase from Gemmatimonas aurantiaca (strain DSM 14586 / JCM 11422 / NBRC 100505 / T-27).